Reading from the N-terminus, the 94-residue chain is Co-chaperonin GroES (94 aa).

This sequence belongs to the GroES chaperonin family. In terms of assembly, heptamer of 7 subunits arranged in a ring. Interacts with the chaperonin GroEL.

The protein resides in the cytoplasm. Together with the chaperonin GroEL, plays an essential role in assisting protein folding. The GroEL-GroES system forms a nano-cage that allows encapsulation of the non-native substrate proteins and provides a physical environment optimized to promote and accelerate protein folding. GroES binds to the apical surface of the GroEL ring, thereby capping the opening of the GroEL channel. The chain is Co-chaperonin GroES from Clostridium botulinum.